Reading from the N-terminus, the 364-residue chain is Dihydroorotate dehydrogenase (quinone) (364 aa).

FMN is bound by residues 61–65 (AGYDK) and Thr85. Lys65 is a substrate binding site. A substrate-binding site is contributed by 110 to 114 (NRLGF). Asn139 and Asn170 together coordinate FMN. Asn170 contacts substrate. Ser173 (nucleophile) is an active-site residue. Residue Asn175 coordinates substrate. FMN-binding residues include Lys215 and Ser243. 244–245 (NT) provides a ligand contact to substrate. FMN-binding positions include Gly266, Gly295, and 316–317 (YT).

Belongs to the dihydroorotate dehydrogenase family. Type 2 subfamily. In terms of assembly, monomer. It depends on FMN as a cofactor.

Its subcellular location is the cell membrane. The enzyme catalyses (S)-dihydroorotate + a quinone = orotate + a quinol. It participates in pyrimidine metabolism; UMP biosynthesis via de novo pathway; orotate from (S)-dihydroorotate (quinone route): step 1/1. Catalyzes the conversion of dihydroorotate to orotate with quinone as electron acceptor. This is Dihydroorotate dehydrogenase (quinone) from Brucella anthropi (strain ATCC 49188 / DSM 6882 / CCUG 24695 / JCM 21032 / LMG 3331 / NBRC 15819 / NCTC 12168 / Alc 37) (Ochrobactrum anthropi).